The sequence spans 195 residues: Guanylate kinase (195 aa).

One can recognise a Guanylate kinase-like domain in the interval 5–183; sequence GILFVISGPS…ALQKITAIII (179 aa). ATP is bound at residue 12-19; sequence GPSGVGKG.

This sequence belongs to the guanylate kinase family.

It localises to the cytoplasm. It carries out the reaction GMP + ATP = GDP + ADP. Its function is as follows. Essential for recycling GMP and indirectly, cGMP. This chain is Guanylate kinase, found in Syntrophomonas wolfei subsp. wolfei (strain DSM 2245B / Goettingen).